The primary structure comprises 192 residues: MNTQDVIDIFKQADAILEGHFILTSGRHSATYMQKAKVFMHAHLTEKLCRGLAEKIKKSVEEKIDYVVGPAIGGLIPSYETSRHLGIPSLWVERVNGRFELRRFEIKKGARVVIVEDIVTTGLSIRETVEALVTAGANVLASACILDRSGGKVDVGVPLISLAEYEIASYASDAVPAELAELPAIKPGSRNI.

A 5-phospho-alpha-D-ribose 1-diphosphate-binding site is contributed by 116-124 (EDIVTTGLS). 2 residues coordinate orotate: Thr120 and Arg148.

Belongs to the purine/pyrimidine phosphoribosyltransferase family. PyrE subfamily. As to quaternary structure, homodimer. It depends on Mg(2+) as a cofactor.

The enzyme catalyses orotidine 5'-phosphate + diphosphate = orotate + 5-phospho-alpha-D-ribose 1-diphosphate. Its pathway is pyrimidine metabolism; UMP biosynthesis via de novo pathway; UMP from orotate: step 1/2. In terms of biological role, catalyzes the transfer of a ribosyl phosphate group from 5-phosphoribose 1-diphosphate to orotate, leading to the formation of orotidine monophosphate (OMP). The polypeptide is Orotate phosphoribosyltransferase (Bartonella henselae (strain ATCC 49882 / DSM 28221 / CCUG 30454 / Houston 1) (Rochalimaea henselae)).